Here is a 357-residue protein sequence, read N- to C-terminus: UDP-N-acetylglucosamine--N-acetylmuramyl-(pentapeptide) pyrophosphoryl-undecaprenol N-acetylglucosamine transferase (357 aa).

Residues 12–14 (TGG), Asn-124, Arg-163, Ser-191, Ile-245, 264–269 (ALTVSE), and Gln-290 contribute to the UDP-N-acetyl-alpha-D-glucosamine site.

The protein belongs to the glycosyltransferase 28 family. MurG subfamily.

The protein localises to the cell inner membrane. It carries out the reaction di-trans,octa-cis-undecaprenyl diphospho-N-acetyl-alpha-D-muramoyl-L-alanyl-D-glutamyl-meso-2,6-diaminopimeloyl-D-alanyl-D-alanine + UDP-N-acetyl-alpha-D-glucosamine = di-trans,octa-cis-undecaprenyl diphospho-[N-acetyl-alpha-D-glucosaminyl-(1-&gt;4)]-N-acetyl-alpha-D-muramoyl-L-alanyl-D-glutamyl-meso-2,6-diaminopimeloyl-D-alanyl-D-alanine + UDP + H(+). Its pathway is cell wall biogenesis; peptidoglycan biosynthesis. Functionally, cell wall formation. Catalyzes the transfer of a GlcNAc subunit on undecaprenyl-pyrophosphoryl-MurNAc-pentapeptide (lipid intermediate I) to form undecaprenyl-pyrophosphoryl-MurNAc-(pentapeptide)GlcNAc (lipid intermediate II). This chain is UDP-N-acetylglucosamine--N-acetylmuramyl-(pentapeptide) pyrophosphoryl-undecaprenol N-acetylglucosamine transferase, found in Nitrosospira multiformis (strain ATCC 25196 / NCIMB 11849 / C 71).